Consider the following 75-residue polypeptide: MARYFRRRKFCRFTAEGVTEIDYKDIATLKNYITESGKIVPSRITGTNAKYQRQLARAIKRARYLSLLPYTDLHQ.

This sequence belongs to the bacterial ribosomal protein bS18 family. Part of the 30S ribosomal subunit. Forms a tight heterodimer with protein bS6.

Functionally, binds as a heterodimer with protein bS6 to the central domain of the 16S rRNA, where it helps stabilize the platform of the 30S subunit. This chain is Small ribosomal subunit protein bS18, found in Shewanella loihica (strain ATCC BAA-1088 / PV-4).